The primary structure comprises 361 residues: uncharacterized protein (361 aa).

33-40 (GPINSGKT) contacts ATP.

The protein belongs to the archaeal ATPase family.

This is an uncharacterized protein from Methanocaldococcus jannaschii (strain ATCC 43067 / DSM 2661 / JAL-1 / JCM 10045 / NBRC 100440) (Methanococcus jannaschii).